A 501-amino-acid chain; its full sequence is MKKISLLLASLCALFLVACSNQKQADGKLNIVTTFYPVYEFTKQVAGDTANVELLIGAGTEPHEYEPSAKAVAKIQDADTFVYENENMETWVPKLLDTLDKKKVKTIKATGDMLLLPGGEEEEGDHDHGEEGHHHEFDPHVWLSPVRAIKLVEHIRDSLSADYPDKKETFEKNAAAYIEKLQSLDKAYAEGLSQAKQKSFVTQHAAFNYLALDYGLKQVAISGLSPDAEPSAARLAELTEYVKKNKIAYIYFEENASQALANTLSKEAGVKTDVLNPLESLTEEDTKAGENYISVMEKNLKALKQTTDQEGPAIEPEKAEDTKTVQNGYFEDAAVKDRTLSDYAGNWQSVYPFLEDGTFDQVFDYKAKLTGKMTQAEYKAYYTKGYQTDVTKINITDNTMEFVQGGQSKKYTYKYVGKKILTYKKGNRGVRFLFEATDADAGQFKYVQFSDHNIAPVKAEHFHIFFGGTSQETLFEEMDNWPTYYPDNLSGQEIAQEMLAH.

Positions 1-18 (MKKISLLLASLCALFLVA) are cleaved as a signal peptide. The N-palmitoyl cysteine moiety is linked to residue Cys19. Residue Cys19 is the site of S-diacylglycerol cysteine attachment. His63 lines the Zn(2+) pocket. The tract at residues 116–136 (LPGGEEEEGDHDHGEEGHHHE) is disordered. Residues 120–136 (EEEEGDHDHGEEGHHHE) form a his-rich loop region. Residues 125-136 (DHDHGEEGHHHE) show a composition bias toward basic and acidic residues. The Zn(2+) site is built by His140, His204, and Glu279.

It belongs to the bacterial solute-binding protein 9 family.

The protein resides in the cell membrane. In terms of biological role, part of the ATP-binding cassette (ABC) transport system AdcABC involved in zinc import. Binds zinc with high affinity and specificity and delivers it to the membrane permease for translocation into the cytoplasm. Required for transformability. The polypeptide is Zinc-binding lipoprotein AdcA (adcA) (Streptococcus pneumoniae (strain ATCC BAA-255 / R6)).